Here is a 252-residue protein sequence, read N- to C-terminus: Vacuolar-sorting protein dot2 (252 aa).

This sequence belongs to the SNF8 family. Component of the endosomal sorting complex required for transport II (ESCRT-II).

It is found in the cytoplasm. Its subcellular location is the nucleus. It localises to the endosome membrane. In terms of biological role, component of the endosomal sorting complex required for transport II (ESCRT-II), which is required for multivesicular body (MVB) formation and sorting of endosomal cargo proteins into MVBs. The MVB pathway mediates delivery of transmembrane proteins into the lumen of the lysosome for degradation. The ESCRT-II complex is probably involved in the recruitment of the ESCRT-III complex. Negatively regulates meiotic spindle pole body maturation via indirect regulation of the pcp1 gene. Required for efficient entry into pre-meiotic S phase. This Schizosaccharomyces pombe (strain 972 / ATCC 24843) (Fission yeast) protein is Vacuolar-sorting protein dot2 (dot2).